The sequence spans 875 residues: Serine/threonine-protein kinase D2 (875 aa).

Positions methionine 1–proline 12 are enriched in low complexity. Residues methionine 1–leucine 35 form a disordered region. The span at serine 14–leucine 35 shows a compositional bias: pro residues. Serine 30 is modified (phosphoserine). Position 87 is a phosphotyrosine (tyrosine 87). A Phorbol-ester/DAG-type 1 zinc finger spans residues proline 138 to cysteine 188. 8 positions are modified to phosphoserine: serine 197, serine 198, serine 200, serine 203, serine 206, serine 211, serine 212, and serine 214. A disordered region spans residues arginine 224 to tyrosine 247. Over residues serine 236 to serine 245 the composition is skewed to low complexity. Phosphoserine; by CSNK1D and CSNK1E is present on serine 244. Serine 245 is modified (phosphoserine). A Phorbol-ester/DAG-type 2 zinc finger spans residues proline 265–cysteine 315. Positions aspartate 332–glutamine 374 are disordered. The PH domain maps to threonine 398 to methionine 510. Phosphotyrosine is present on tyrosine 408. Phosphotyrosine; by ABL1 is present on tyrosine 439. A Phosphoserine modification is found at serine 519. The Protein kinase domain occupies isoleucine 552–leucine 808. ATP is bound by residues leucine 558–valine 566 and lysine 581. Catalysis depends on aspartate 675, which acts as the Proton acceptor. Serine 707 carries the post-translational modification Phosphoserine; by PKC. Serine 711 carries the phosphoserine; by autocatalysis modification. Tyrosine 718 carries the phosphotyrosine; by ABL1 modification. The Important for ABL1-mediated Tyr-718 phosphorylation motif lies at leucine 725 to glutamine 727. Residue serine 873 is modified to Phosphoserine; by autocatalysis.

This sequence belongs to the protein kinase superfamily. CAMK Ser/Thr protein kinase family. PKD subfamily. In terms of assembly, interacts (via C-terminus) with LCK. Interacts (via N-terminus and zing-finger domain 1 and 2) with PRKCD in response to oxidative stress; the interaction is independent of PRKD2 tyrosine phosphorylation. It depends on Mg(2+) as a cofactor. Post-translationally, phosphorylation of Ser-873 correlates with the activation status of the kinase. Ser-707 is probably phosphorylated by PKC. Phosphorylation at Ser-244 by CSNK1D and CSNK1E promotes nuclear localization and substrate targeting. Phosphorylation at Ser-244, Ser-707 and Ser-711 is required for nuclear localization. Phosphorylated at Tyr-438 by ABL1 in response to oxidative stress. Phosphorylated at Tyr-718 by ABL1 specifically in response to oxidative stress; requires prior phosphorylation at Ser-707 or/and Ser-711.

It localises to the cytoplasm. It is found in the cell membrane. Its subcellular location is the golgi apparatus. The protein resides in the trans-Golgi network. It carries out the reaction L-seryl-[protein] + ATP = O-phospho-L-seryl-[protein] + ADP + H(+). It catalyses the reaction L-threonyl-[protein] + ATP = O-phospho-L-threonyl-[protein] + ADP + H(+). Activated by DAG and phorbol esters. Phorbol-ester/DAG-type domains bind DAG, mediating translocation to membranes. Autophosphorylation of Ser-711 and phosphorylation of Ser-707 by PKC relieves auto-inhibition by the PH domain. Catalytic activity is further increased by phosphorylation at Tyr-718 in response to oxidative stress. In terms of biological role, serine/threonine-protein kinase that converts transient diacylglycerol (DAG) signals into prolonged physiological effects downstream of PKC, and is involved in the regulation of cell proliferation via MAPK1/3 (ERK1/2) signaling, oxidative stress-induced NF-kappa-B activation, inhibition of HDAC7 transcriptional repression, signaling downstream of T-cell antigen receptor (TCR) and cytokine production, and plays a role in Golgi membrane trafficking, angiogenesis, secretory granule release and cell adhesion. May potentiate mitogenesis induced by the neuropeptide bombesin by mediating an increase in the duration of MAPK1/3 (ERK1/2) signaling, which leads to accumulation of immediate-early gene products including FOS that stimulate cell cycle progression. In response to oxidative stress, is phosphorylated at Tyr-438 and Tyr-718 by ABL1, which leads to the activation of PRKD2 without increasing its catalytic activity, and mediates activation of NF-kappa-B. In response to the activation of the gastrin receptor CCKBR, is phosphorylated at Ser-244 by CSNK1D and CSNK1E, translocates to the nucleus, phosphorylates HDAC7, leading to nuclear export of HDAC7 and inhibition of HDAC7 transcriptional repression of NR4A1/NUR77. Upon TCR stimulation, is activated independently of ZAP70, translocates from the cytoplasm to the nucleus and is required for interleukin-2 (IL2) promoter up-regulation. During adaptive immune responses, is required in peripheral T-lymphocytes for the production of the effector cytokines IL2 and IFNG after TCR engagement and for optimal induction of antibody responses to antigens. In epithelial cells stimulated with lysophosphatidic acid (LPA), is activated through a PKC-dependent pathway and mediates LPA-stimulated interleukin-8 (IL8) secretion via a NF-kappa-B-dependent pathway. During TCR-induced T-cell activation, interacts with and is activated by the tyrosine kinase LCK, which results in the activation of the NFAT transcription factors. In the trans-Golgi network (TGN), regulates the fission of transport vesicles that are on their way to the plasma membrane and in polarized cells is involved in the transport of proteins from the TGN to the basolateral membrane. Plays an important role in endothelial cell proliferation and migration prior to angiogenesis, partly through modulation of the expression of KDR/VEGFR2 and FGFR1, two key growth factor receptors involved in angiogenesis. In secretory pathway, is required for the release of chromogranin-A (CHGA)-containing secretory granules from the TGN. Downstream of PRKCA, plays important roles in angiotensin-2-induced monocyte adhesion to endothelial cells. The chain is Serine/threonine-protein kinase D2 (Prkd2) from Mus musculus (Mouse).